The following is a 258-amino-acid chain: Synaptosomal-associated protein 29 (258 aa).

The disordered stretch occupies residues 1-41; that stretch reads MSAYPKSYNPFDDDGEDEGARPAPWRDARDLPDGPDAPADR. Positions 18–32 are enriched in basic and acidic residues; it reads EGARPAPWRDARDLP. Positions 76–107 form a coiled coil; that stretch reads ASSEELARQRGVLERTEKMVDKMDQDLKISQK. Phosphoserine is present on residues S77, S78, and S114. The interval 127–190 is disordered; sequence PVETPPEQNG…GSAVSTDAYP (64 aa). A phosphothreonine mark is found at T130 and T137. Residues 132–144 are compositionally biased toward polar residues; it reads PEQNGTLASQPNS. A phosphoserine mark is found at S163, S182, S185, S204, and S210. The t-SNARE coiled-coil homology domain occupies 196 to 258; the sequence is QAYHQKIDSN…KSTERKVRQL (63 aa).

This sequence belongs to the SNAP-25 family. Forms a SNARE complex, composed of VAMP8, SNAP29 and STX17, involved in fusion of autophagosome with lysosome. Interacts with multiple syntaxins including STX6. Interacts with EIPR1. Interacts with STX17; this interaction is increased in the absence of TMEM39A.

It is found in the cytoplasm. Its subcellular location is the golgi apparatus membrane. It localises to the cytoplasmic vesicle. The protein localises to the autophagosome membrane. The protein resides in the cell projection. It is found in the cilium membrane. SNAREs, soluble N-ethylmaleimide-sensitive factor-attachment protein receptors, are essential proteins for fusion of cellular membranes. SNAREs localized on opposing membranes assemble to form a trans-SNARE complex, an extended, parallel four alpha-helical bundle that drives membrane fusion. SNAP29 is a SNARE involved in autophagy through the direct control of autophagosome membrane fusion with the lysososome membrane. Also plays a role in ciliogenesis by regulating membrane fusions. In Pongo abelii (Sumatran orangutan), this protein is Synaptosomal-associated protein 29.